The sequence spans 958 residues: Unconventional myosin-Ih (958 aa).

Positions 12 to 691 (GVQDFVLLDA…TLFATEDAFE (680 aa)) constitute a Myosin motor domain. 105-112 (GESGAGKT) serves as a coordination point for ATP. The residue at position 365 (serine 365) is a Phosphoserine. The interval 568–590 (LSSLLEILISKEPSYIRCIKPNE) is actin-binding. IQ domains follow at residues 694–716 (KHQLVSRIQATYKGCLGRREYMK) and 717–746 (KRQAATKLEAHWRGVLARKEIKRRRWAVQI). The 183-residue stretch at 773-955 (RKNYILNLRY…NGQLRVVSAG (183 aa)) folds into the TH1 domain.

It belongs to the TRAFAC class myosin-kinesin ATPase superfamily. Myosin family. As to expression, highly expressed in the central nervous system, including the forebrain, midbrain and lower medulla. In the lower medulla, it is broadly expressed throughout the reticular formation. It is expressed in the retrotrapezoid nucleus and the nucleus of the solitary tract, as well as motor neurons of the facial, vagal and ambiguus nuclei. Expressed in neonatal inner-ear organs.

In terms of biological role, myosins are actin-based motor molecules with ATPase activity. Unconventional myosins serve in intracellular movements. Their highly divergent tails are presumed to bind to membranous compartments, which would be moved relative to actin filaments. The polypeptide is Unconventional myosin-Ih (Myo1h) (Mus musculus (Mouse)).